Reading from the N-terminus, the 457-residue chain is Siroheme synthase (457 aa).

The segment at 1 to 204 is precorrin-2 dehydrogenase /sirohydrochlorin ferrochelatase; it reads MDHLPIFCQL…NDQKAITETT (204 aa). Residues 22–23 and 43–44 contribute to the NAD(+) site; these read DV and LA. Ser-128 bears the Phosphoserine mark. The uroporphyrinogen-III C-methyltransferase stretch occupies residues 216-457; that stretch reads GEVVLVGAGP…RDKLNWFSNH (242 aa). Pro-225 contributes to the S-adenosyl-L-methionine binding site. Asp-248 acts as the Proton acceptor in catalysis. Catalysis depends on Lys-270, which acts as the Proton donor. S-adenosyl-L-methionine contacts are provided by residues 301–303, Ile-306, 331–332, Met-382, and Gly-411; these read GGD and TA.

It in the N-terminal section; belongs to the precorrin-2 dehydrogenase / sirohydrochlorin ferrochelatase family. The protein in the C-terminal section; belongs to the precorrin methyltransferase family.

It catalyses the reaction uroporphyrinogen III + 2 S-adenosyl-L-methionine = precorrin-2 + 2 S-adenosyl-L-homocysteine + H(+). It carries out the reaction precorrin-2 + NAD(+) = sirohydrochlorin + NADH + 2 H(+). The catalysed reaction is siroheme + 2 H(+) = sirohydrochlorin + Fe(2+). The protein operates within cofactor biosynthesis; adenosylcobalamin biosynthesis; precorrin-2 from uroporphyrinogen III: step 1/1. It functions in the pathway cofactor biosynthesis; adenosylcobalamin biosynthesis; sirohydrochlorin from precorrin-2: step 1/1. Its pathway is porphyrin-containing compound metabolism; siroheme biosynthesis; precorrin-2 from uroporphyrinogen III: step 1/1. It participates in porphyrin-containing compound metabolism; siroheme biosynthesis; siroheme from sirohydrochlorin: step 1/1. The protein operates within porphyrin-containing compound metabolism; siroheme biosynthesis; sirohydrochlorin from precorrin-2: step 1/1. Its function is as follows. Multifunctional enzyme that catalyzes the SAM-dependent methylations of uroporphyrinogen III at position C-2 and C-7 to form precorrin-2 via precorrin-1. Then it catalyzes the NAD-dependent ring dehydrogenation of precorrin-2 to yield sirohydrochlorin. Finally, it catalyzes the ferrochelation of sirohydrochlorin to yield siroheme. The chain is Siroheme synthase from Escherichia coli (strain 55989 / EAEC).